We begin with the raw amino-acid sequence, 542 residues long: MKANNRNRTSVAIVGAGPNGAAMANLLGLYGVDTIVVERAPQIVEFPRAVGIDDEALRLFQTAGLADELSRDIIQNVPLRMFKANGECFADIRPSIREFGWWRRNIFMQHLAERTLRDALARYPHVSLRTGEEVVGLEQDDECVTLQVRAADGQQYELDADYVVAADGGRSPVREMLGIRLAGTTHPMKWVVVDVKNARLDQPCTALNCDPRRPNVCIYLPFNYRRWEFLVFPHEDEEAIAQPESIRALIAPYVDDVDRIEIVRARTYTHHSRVAERFVAGRVALIGDAAHLSPPWIGQGLNAGLRDVGNLAWKLAGVVNGTLHRRVISTYESERRDHAKAMIDLADTFGAMLMPTSRLVAFLRDRFLGLARYAPGLKDYVLQMRFKPMPSYTHGVVVTGTSDAVGRMIVQPDVETADGARRKLDDVLGPWFAIIGWRCDPQACLSDDDRAFWTALGAKFVQIVRSRSGTCREQRIASAHDSVCVEDVDNAMAEWFDRHAAPLVVVRPDRYVAAQTDAAGMAGVTAAFQAFAARQRETADVC.

FAD is bound by residues 10–39 and 278–288; these read SVAIVGAGPNGAAMANLLGLYGVDTIVVER and FVAGRVALIGD.

This sequence belongs to the PheA/TfdB FAD monooxygenase family. The cofactor is FAD.

The catalysed reaction is 3-(3-hydroxyphenyl)propanoate + NADH + O2 + H(+) = 3-(2,3-dihydroxyphenyl)propanoate + NAD(+) + H2O. It catalyses the reaction (2E)-3-(3-hydroxyphenyl)prop-2-enoate + NADH + O2 + H(+) = (2E)-3-(2,3-dihydroxyphenyl)prop-2-enoate + NAD(+) + H2O. The protein operates within aromatic compound metabolism; 3-phenylpropanoate degradation. Its function is as follows. Catalyzes the insertion of one atom of molecular oxygen into position 2 of the phenyl ring of 3-(3-hydroxyphenyl)propionate (3-HPP) and hydroxycinnamic acid (3HCI). This chain is 3-(3-hydroxy-phenyl)propionate/3-hydroxycinnamic acid hydroxylase, found in Burkholderia cenocepacia (strain HI2424).